The following is a 282-amino-acid chain: MTLLDGKALSAKIKEELKEKNQFLKSKGIESCLAVILVGDDPASQTYVKSKAKACEECGIKSLVYHLNENTTQNELLALINTLNHDDSVHGILVQLPLPDHICKDLILESIISSKDVDGFHPINVGYLNLGLESGFLPCTPLGVMKLLKAYEIDLEGKDAVIIGASNIVGRPMATMLLNAGATVSVCHIKTKDLSLYTRQADLIIVAAGCVNLLRSDMVKEGVIVIDVGINRLESGKIVGDVDFEEVSKKSSYITPVPGGVGPMTIAMLLENTVKSAKNRLN.

NADP(+) is bound by residues Gly164 to Ser166, Ile189, and Ile230.

Belongs to the tetrahydrofolate dehydrogenase/cyclohydrolase family. Homodimer.

It catalyses the reaction (6R)-5,10-methylene-5,6,7,8-tetrahydrofolate + NADP(+) = (6R)-5,10-methenyltetrahydrofolate + NADPH. The catalysed reaction is (6R)-5,10-methenyltetrahydrofolate + H2O = (6R)-10-formyltetrahydrofolate + H(+). It functions in the pathway one-carbon metabolism; tetrahydrofolate interconversion. In terms of biological role, catalyzes the oxidation of 5,10-methylenetetrahydrofolate to 5,10-methenyltetrahydrofolate and then the hydrolysis of 5,10-methenyltetrahydrofolate to 10-formyltetrahydrofolate. The chain is Bifunctional protein FolD from Campylobacter jejuni (strain RM1221).